The chain runs to 623 residues: MMQIDYLLTAIFDPDRGPVLQYQCPENGEASDLHFLAELMLPDRVHERREDWSLFFIHFSKKSNVFSLFSNVDDINFEPSDSNMYYVLNTIRAKRVEGTRRGGSVFAMAICTTFPHVHALKPLLDTAWEIFDSSPSLKTLSMLHKSFNLHNFQSFYQKLSLDSSLILALNNFWSFFNLYLTNSPHIMNDIINKDIDNIPKPGSELIELSRDSYNSQATFCLSAESQERYVTCVIPSIHIPECVGEVSISNLINTFIDGPSPFMNTDISADINPINVLITALLISKKVLFLTKTSSASVLADFVLSSCALVSGATGLLQGLTRITFPYIDLSNVESLVKLPGYLAGVMNPAFTHHADWWDVLCDIDNQTIQVSSNLFSDATTTMDTKSLFNNTSPFTPISKDNQDDEIFIKDLRKFLKADDKETLVRWRVRLYIQSFIRKATSYEALFLESSPLNPYYKDYKFKGFGWSWDNDDEKVNELLYLAPKFEAWRQASTYKDYCYRLHCASTPVLRCMDIQFHLDRLRNSSLSTTDAAEIFLALESHIRTEEDVNYLLSNCPLHSGGLSVIAFGLYHISDKVRKAVSKLLNRIETHKYGKLFYMALNKVDISTHVYINSQHKKKKDSF.

In terms of domain architecture, uDENN spans 5–204; that stretch reads DYLLTAIFDP…IDNIPKPGSE (200 aa). The region spanning 248–386 is the cDENN domain; sequence ISNLINTFID…SDATTTMDTK (139 aa). Positions 388 to 476 constitute a dDENN domain; that stretch reads LFNNTSPFTP…WSWDNDDEKV (89 aa).

This sequence belongs to the AFI1/mesA family.

The protein resides in the cytoplasm. It localises to the cell cortex. Its subcellular location is the nucleus. Its function is as follows. Involved in polarity establishment. The protein is AFI1-like protein C776.06c of Schizosaccharomyces pombe (strain 972 / ATCC 24843) (Fission yeast).